Reading from the N-terminus, the 481-residue chain is 4-hydroxyphenylacetate 3-monooxygenase oxygenase component (481 aa).

Residues 100–104 (RSPDY) and His142 contribute to the substrate site. FAD is bound by residues 142–144 (HAL), 148–151 (QVNR), and Thr185. 197–198 (ST) lines the substrate pocket. 444 to 447 (DPVR) lines the FAD pocket.

The protein belongs to the FADH(2)-utilizing monooxygenase family. Homotetramer consisting of a dimer of dimers. 4-HPA 3-monooxygenase consists of a reductase component HpaC and an oxygenase component HpaB.

It carries out the reaction 4-hydroxyphenylacetate + FADH2 + O2 = 3,4-dihydroxyphenylacetate + FAD + H2O + H(+). It functions in the pathway aromatic compound metabolism; 4-hydroxyphenylacetate degradation; pyruvate and succinate semialdehyde from 4-hydroxyphenylacetate: step 1/7. Functionally, utilizes FADH(2) supplied by HpaC, to catalyze the hydroxylation of 4-hydroxyphenylacetic acid, leading to the production of 3,4-dihydroxyphenylacetic acid (DHPA). The protein is 4-hydroxyphenylacetate 3-monooxygenase oxygenase component of Thermus thermophilus (strain ATCC 27634 / DSM 579 / HB8).